The chain runs to 236 residues: MSSGADGGGGAAVAARSDKGSPGEDGFVPSALGTREHWDAVYERELQTFREYGDTGEIWFGEESMNRLIRWMQKHKIPLDASVLDIGTGNGVFLVELAKFGFSNITGIDYSPSAIQLSGSIIEKEGLSNIKLKVEDFLNLSTQLSGFHICIDKGTFDAISLNPDNAIEKRKQYVKSLSRVLKVKGFFLITSCNWTKEELLNEFSEGFELLEELPTPKFSFGGRSGNSVAALVFQKM.

Over residues 1-11 the composition is skewed to gly residues; the sequence is MSSGADGGGGA. The interval 1–31 is disordered; sequence MSSGADGGGGAAVAARSDKGSPGEDGFVPSA. Residue S2 is modified to N-acetylserine. S21 is subject to Phosphoserine.

It belongs to the class I-like SAM-binding methyltransferase superfamily. EFM4 family.

It localises to the cytoplasm. The protein localises to the nucleus. It catalyses the reaction L-lysyl-[protein] + 3 S-adenosyl-L-methionine = N(6),N(6),N(6)-trimethyl-L-lysyl-[protein] + 3 S-adenosyl-L-homocysteine + 3 H(+). Protein-lysine methyltransferase that selectively catalyzes the trimethylation of EEF1A at 'Lys-318'. This chain is EEF1A lysine methyltransferase 2, found in Homo sapiens (Human).